A 254-amino-acid polypeptide reads, in one-letter code: Imidazole glycerol phosphate synthase subunit HisF (254 aa).

Residues D12 and D131 contribute to the active site.

Belongs to the HisA/HisF family. As to quaternary structure, heterodimer of HisH and HisF.

The protein localises to the cytoplasm. It catalyses the reaction 5-[(5-phospho-1-deoxy-D-ribulos-1-ylimino)methylamino]-1-(5-phospho-beta-D-ribosyl)imidazole-4-carboxamide + L-glutamine = D-erythro-1-(imidazol-4-yl)glycerol 3-phosphate + 5-amino-1-(5-phospho-beta-D-ribosyl)imidazole-4-carboxamide + L-glutamate + H(+). Its pathway is amino-acid biosynthesis; L-histidine biosynthesis; L-histidine from 5-phospho-alpha-D-ribose 1-diphosphate: step 5/9. Functionally, IGPS catalyzes the conversion of PRFAR and glutamine to IGP, AICAR and glutamate. The HisF subunit catalyzes the cyclization activity that produces IGP and AICAR from PRFAR using the ammonia provided by the HisH subunit. This is Imidazole glycerol phosphate synthase subunit HisF from Corynebacterium aurimucosum (strain ATCC 700975 / DSM 44827 / CIP 107346 / CN-1) (Corynebacterium nigricans).